Consider the following 478-residue polypeptide: Siroheme synthase (478 aa).

The interval 1 to 207 (MTANVLFPLF…QRHAEAEAVL (207 aa)) is precorrin-2 dehydrogenase /sirohydrochlorin ferrochelatase. Residues 25–26 (KV) and 46–47 (PS) contribute to the NAD(+) site. At S132 the chain carries Phosphoserine. The uroporphyrinogen-III C-methyltransferase stretch occupies residues 220-478 (GSVTLVGAGA…PCPPRTHPIS (259 aa)). D252 (proton acceptor) is an active-site residue. K274 acts as the Proton donor in catalysis. S-adenosyl-L-methionine contacts are provided by residues 305–307 (GGD), V310, 335–336 (TA), M387, and G416.

It in the N-terminal section; belongs to the precorrin-2 dehydrogenase / sirohydrochlorin ferrochelatase family. In the C-terminal section; belongs to the precorrin methyltransferase family.

The enzyme catalyses uroporphyrinogen III + 2 S-adenosyl-L-methionine = precorrin-2 + 2 S-adenosyl-L-homocysteine + H(+). The catalysed reaction is precorrin-2 + NAD(+) = sirohydrochlorin + NADH + 2 H(+). It carries out the reaction siroheme + 2 H(+) = sirohydrochlorin + Fe(2+). Its pathway is cofactor biosynthesis; adenosylcobalamin biosynthesis; precorrin-2 from uroporphyrinogen III: step 1/1. It participates in cofactor biosynthesis; adenosylcobalamin biosynthesis; sirohydrochlorin from precorrin-2: step 1/1. The protein operates within porphyrin-containing compound metabolism; siroheme biosynthesis; precorrin-2 from uroporphyrinogen III: step 1/1. It functions in the pathway porphyrin-containing compound metabolism; siroheme biosynthesis; siroheme from sirohydrochlorin: step 1/1. Its pathway is porphyrin-containing compound metabolism; siroheme biosynthesis; sirohydrochlorin from precorrin-2: step 1/1. Functionally, multifunctional enzyme that catalyzes the SAM-dependent methylations of uroporphyrinogen III at position C-2 and C-7 to form precorrin-2 via precorrin-1. Then it catalyzes the NAD-dependent ring dehydrogenation of precorrin-2 to yield sirohydrochlorin. Finally, it catalyzes the ferrochelation of sirohydrochlorin to yield siroheme. This is Siroheme synthase from Xylella fastidiosa (strain M23).